A 112-amino-acid chain; its full sequence is Integration host factor subunit alpha (112 aa).

This sequence belongs to the bacterial histone-like protein family. In terms of assembly, heterodimer of an alpha and a beta chain.

Its function is as follows. This protein is one of the two subunits of integration host factor, a specific DNA-binding protein that functions in genetic recombination as well as in transcriptional and translational control. The chain is Integration host factor subunit alpha from Rhizobium johnstonii (strain DSM 114642 / LMG 32736 / 3841) (Rhizobium leguminosarum bv. viciae).